The sequence spans 238 residues: Phosphoribosylaminoimidazole-succinocarboxamide synthase (238 aa).

The protein belongs to the SAICAR synthetase family.

The enzyme catalyses 5-amino-1-(5-phospho-D-ribosyl)imidazole-4-carboxylate + L-aspartate + ATP = (2S)-2-[5-amino-1-(5-phospho-beta-D-ribosyl)imidazole-4-carboxamido]succinate + ADP + phosphate + 2 H(+). The protein operates within purine metabolism; IMP biosynthesis via de novo pathway; 5-amino-1-(5-phospho-D-ribosyl)imidazole-4-carboxamide from 5-amino-1-(5-phospho-D-ribosyl)imidazole-4-carboxylate: step 1/2. The polypeptide is Phosphoribosylaminoimidazole-succinocarboxamide synthase (Alcanivorax borkumensis (strain ATCC 700651 / DSM 11573 / NCIMB 13689 / SK2)).